A 386-amino-acid chain; its full sequence is ABC transporter permease protein NatB (386 aa).

Transmembrane regions (helical) follow at residues 19-39, 172-192, 226-246, 273-293, 300-320, and 353-373; these read TILL…FFYE, AIML…SGAM, WLAV…FLIL, ALII…ISIM, AQSY…FIFS, and ATIL…FLLA.

As to quaternary structure, the complex is composed of NatA and NatB.

The protein localises to the cell membrane. It catalyses the reaction Na(+)(in) + ATP + H2O = Na(+)(out) + ADP + phosphate + H(+). Its function is as follows. Part of an ABC transporter that catalyzes ATP-dependent electrogenic sodium extrusion. This chain is ABC transporter permease protein NatB, found in Bacillus subtilis (strain 168).